Here is a 255-residue protein sequence, read N- to C-terminus: tRNA (guanine-N(1)-)-methyltransferase (255 aa).

Residues glycine 113 and 133–138 (IGDYVL) contribute to the S-adenosyl-L-methionine site.

This sequence belongs to the RNA methyltransferase TrmD family. As to quaternary structure, homodimer.

It is found in the cytoplasm. The enzyme catalyses guanosine(37) in tRNA + S-adenosyl-L-methionine = N(1)-methylguanosine(37) in tRNA + S-adenosyl-L-homocysteine + H(+). Its function is as follows. Specifically methylates guanosine-37 in various tRNAs. The polypeptide is tRNA (guanine-N(1)-)-methyltransferase (Salmonella choleraesuis (strain SC-B67)).